Here is a 116-residue protein sequence, read N- to C-terminus: Ribosome-binding factor A (116 aa).

It belongs to the RbfA family. As to quaternary structure, monomer. Binds 30S ribosomal subunits, but not 50S ribosomal subunits or 70S ribosomes.

It is found in the cytoplasm. Its function is as follows. One of several proteins that assist in the late maturation steps of the functional core of the 30S ribosomal subunit. Associates with free 30S ribosomal subunits (but not with 30S subunits that are part of 70S ribosomes or polysomes). Required for efficient processing of 16S rRNA. May interact with the 5'-terminal helix region of 16S rRNA. This is Ribosome-binding factor A from Streptococcus pneumoniae (strain ATCC 700669 / Spain 23F-1).